The primary structure comprises 631 residues: Phosphomethylpyrimidine synthase (631 aa).

The disordered stretch occupies residues 54–80; that stretch reads TLVGGDKDKPRYETNEPIPVYDTSGPY. Residues 58–67 show a composition bias toward basic and acidic residues; it reads GDKDKPRYET. Substrate-binding positions include N239, M268, Y297, H333, 353–355, 394–397, and E433; these read SRG and DGLR. H437 contributes to the Zn(2+) binding site. A substrate-binding site is contributed by Y460. Residue H501 coordinates Zn(2+). Residues C581, C584, and C589 each contribute to the [4Fe-4S] cluster site.

It belongs to the ThiC family. As to quaternary structure, homodimer. Requires [4Fe-4S] cluster as cofactor.

It carries out the reaction 5-amino-1-(5-phospho-beta-D-ribosyl)imidazole + S-adenosyl-L-methionine = 4-amino-2-methyl-5-(phosphooxymethyl)pyrimidine + CO + 5'-deoxyadenosine + formate + L-methionine + 3 H(+). It functions in the pathway cofactor biosynthesis; thiamine diphosphate biosynthesis. Functionally, catalyzes the synthesis of the hydroxymethylpyrimidine phosphate (HMP-P) moiety of thiamine from aminoimidazole ribotide (AIR) in a radical S-adenosyl-L-methionine (SAM)-dependent reaction. The polypeptide is Phosphomethylpyrimidine synthase (Klebsiella pneumoniae subsp. pneumoniae (strain ATCC 700721 / MGH 78578)).